A 309-amino-acid polypeptide reads, in one-letter code: Prepilin leader peptidase/N-methyltransferase (309 aa).

A helical membrane pass occupies residues 35–55; sequence MQLAFAIVLGLVVGSFLNVVV. Zn(2+) is bound by residues Cys96, Cys99, Cys121, and Cys124. The next 6 helical transmembrane spans lie at 147–167, 183–203, 207–227, 230–250, 253–273, and 288–308; these read LALF…AALL, LTLP…FASL, VIGA…FKLL, IEGI…WLGW, LPQV…VATW, and FLAA…LLLG.

The protein belongs to the peptidase A24 family. Requires Zn(2+) as cofactor.

The protein resides in the cell inner membrane. It catalyses the reaction Typically cleaves a -Gly-|-Phe- bond to release an N-terminal, basic peptide of 5-8 residues from type IV prepilin, and then N-methylates the new N-terminal amino group, the methyl donor being S-adenosyl-L-methionine.. Plays an essential role in type IV pili and type II pseudopili formation by proteolytically removing the leader sequence from substrate proteins and subsequently monomethylating the alpha-amino group of the newly exposed N-terminal phenylalanine. This is Prepilin leader peptidase/N-methyltransferase (gspO) from Burkholderia pseudomallei (strain 1026b).